Consider the following 382-residue polypeptide: tRNA(Ile)-lysidine synthase (382 aa).

50 to 55 (SGGRDS) provides a ligand contact to ATP.

It belongs to the tRNA(Ile)-lysidine synthase family.

The protein resides in the cytoplasm. It catalyses the reaction cytidine(34) in tRNA(Ile2) + L-lysine + ATP = lysidine(34) in tRNA(Ile2) + AMP + diphosphate + H(+). In terms of biological role, ligates lysine onto the cytidine present at position 34 of the AUA codon-specific tRNA(Ile) that contains the anticodon CAU, in an ATP-dependent manner. Cytidine is converted to lysidine, thus changing the amino acid specificity of the tRNA from methionine to isoleucine. The chain is tRNA(Ile)-lysidine synthase from Bifidobacterium animalis subsp. lactis (strain AD011).